We begin with the raw amino-acid sequence, 73 residues long: Exodeoxyribonuclease 7 small subunit (73 aa).

This sequence belongs to the XseB family. Heterooligomer composed of large and small subunits.

It localises to the cytoplasm. The enzyme catalyses Exonucleolytic cleavage in either 5'- to 3'- or 3'- to 5'-direction to yield nucleoside 5'-phosphates.. Functionally, bidirectionally degrades single-stranded DNA into large acid-insoluble oligonucleotides, which are then degraded further into small acid-soluble oligonucleotides. In Streptococcus mutans serotype c (strain ATCC 700610 / UA159), this protein is Exodeoxyribonuclease 7 small subunit.